A 201-amino-acid chain; its full sequence is UPF0301 protein RHE_CH00966 (201 aa).

It belongs to the UPF0301 (AlgH) family.

The protein is UPF0301 protein RHE_CH00966 of Rhizobium etli (strain ATCC 51251 / DSM 11541 / JCM 21823 / NBRC 15573 / CFN 42).